Consider the following 159-residue polypeptide: Ribosomal RNA large subunit methyltransferase H (159 aa).

S-adenosyl-L-methionine contacts are provided by residues L76, G108, and 127–132 (FSKMTF).

It belongs to the RNA methyltransferase RlmH family. In terms of assembly, homodimer.

It localises to the cytoplasm. The enzyme catalyses pseudouridine(1915) in 23S rRNA + S-adenosyl-L-methionine = N(3)-methylpseudouridine(1915) in 23S rRNA + S-adenosyl-L-homocysteine + H(+). Its function is as follows. Specifically methylates the pseudouridine at position 1915 (m3Psi1915) in 23S rRNA. The protein is Ribosomal RNA large subunit methyltransferase H of Geobacillus kaustophilus (strain HTA426).